The chain runs to 122 residues: Large ribosomal subunit protein uL14 (122 aa).

It belongs to the universal ribosomal protein uL14 family. In terms of assembly, part of the 50S ribosomal subunit. Forms a cluster with proteins L3 and L19. In the 70S ribosome, L14 and L19 interact and together make contacts with the 16S rRNA in bridges B5 and B8.

Binds to 23S rRNA. Forms part of two intersubunit bridges in the 70S ribosome. This Solidesulfovibrio magneticus (strain ATCC 700980 / DSM 13731 / RS-1) (Desulfovibrio magneticus) protein is Large ribosomal subunit protein uL14.